The sequence spans 236 residues: Protein YIPF6 (236 aa).

Ala2 carries the N-acetylalanine modification. The Cytoplasmic portion of the chain corresponds to 2-84 (AEAVESPGDP…HVLYPRKSNT (83 aa)). Ser7 bears the Phosphoserine mark. Residues 85 to 105 (LLRDWDLWGPLILCVTLALML) form a helical membrane-spanning segment. Residues 106–115 (QRGSVDSEKD) are Lumenal-facing. The helical transmembrane segment at 116-136 (GGPQFAEVFVIVWFGAVTITL) threads the bilayer. Topologically, residues 137-146 (NSKLLGGNIS) are cytoplasmic. Residues 147–167 (FFQSLCVLGYCILPLTMAMLV) form a helical membrane-spanning segment. Residues 168–184 (CRLVLLAEPGPVNFMVR) lie on the Lumenal side of the membrane. A helical transmembrane segment spans residues 185–205 (LFVVIIMFAWSIVASTAFLAD). At 206–212 (SQPPNRK) the chain is on the cytoplasmic side. Residues 213 to 233 (ALAVYPVFLFYFVISWMILTF) traverse the membrane as a helical segment. Residues 234–236 (TPQ) are Lumenal-facing.

This sequence belongs to the YIP1 family. Predominantly interacts with YIPF1 or YIPF2, but may also form a ternary complex with YIPF1 and YIPF2. This interaction may stabilize YIPF1 and YIPF2.

It localises to the golgi apparatus membrane. Functionally, may be required for stable YIPF1 and YIPF2 protein expression. The protein is Protein YIPF6 (YIPF6) of Bos taurus (Bovine).